Consider the following 124-residue polypeptide: Class I hydrophobin 1 (124 aa).

The N-terminal stretch at 1 to 18 is a signal peptide; that stretch reads MRFSIATVVLSLAAMVVA. Intrachain disulfides connect cysteine 35–cysteine 85, cysteine 43–cysteine 79, cysteine 44–cysteine 63, and cysteine 86–cysteine 97.

The protein belongs to the fungal hydrophobin family.

It is found in the secreted. The protein localises to the cell wall. Its function is as follows. Aerial growth, conidiation, and dispersal of filamentous fungi in the environment rely upon a capability of their secreting small amphipathic proteins called hydrophobins (HPBs) with low sequence identity. Class I can self-assemble into an outermost layer of rodlet bundles on aerial cell surfaces, conferring cellular hydrophobicity that supports fungal growth, development and dispersal; whereas Class II form highly ordered films at water-air interfaces through intermolecular interactions but contribute nothing to the rodlet structure. In Botryotinia fuckeliana, hydrophobins are not involved in conferring surface hydrophobicity to conidia and aerial hyphae and their function in sclerotia and fruiting bodies remains to be investigated. The polypeptide is Class I hydrophobin 1 (Bhp1) (Botryotinia fuckeliana (strain B05.10) (Noble rot fungus)).